The primary structure comprises 1020 residues: Protein translocase subunit SecA (1020 aa).

ATP contacts are provided by residues Gln143, Gly161–Thr165, and Asp661. Residues Ser974–Pro1020 are disordered. The Zn(2+) site is built by Cys1004, Cys1006, Cys1015, and His1016.

The protein belongs to the SecA family. In terms of assembly, monomer and homodimer. Part of the essential Sec protein translocation apparatus which comprises SecA, SecYEG and auxiliary proteins SecDF. Other proteins may also be involved. Requires Zn(2+) as cofactor.

The protein localises to the cell inner membrane. It is found in the cytoplasm. It carries out the reaction ATP + H2O + cellular proteinSide 1 = ADP + phosphate + cellular proteinSide 2.. Its function is as follows. Part of the Sec protein translocase complex. Interacts with the SecYEG preprotein conducting channel. Has a central role in coupling the hydrolysis of ATP to the transfer of proteins into and across the cell membrane, serving as an ATP-driven molecular motor driving the stepwise translocation of polypeptide chains across the membrane. The chain is Protein translocase subunit SecA from Chlorobium phaeovibrioides (strain DSM 265 / 1930) (Prosthecochloris vibrioformis (strain DSM 265)).